Consider the following 104-residue polypeptide: Complex III assembly factor LYRM7 (104 aa).

The residue at position 60 (Ser-60) is a Phosphoserine.

This sequence belongs to the complex I LYR family. Interacts with UQCRFS1.

Its subcellular location is the mitochondrion matrix. In terms of biological role, assembly factor required for Rieske Fe-S protein UQCRFS1 incorporation into the cytochrome b-c1 (CIII) complex. Functions as a chaperone, binding to this subunit within the mitochondrial matrix and stabilizing it prior to its translocation and insertion into the late CIII dimeric intermediate within the mitochondrial inner membrane. In Rattus norvegicus (Rat), this protein is Complex III assembly factor LYRM7 (Lyrm7).